A 570-amino-acid chain; its full sequence is MNSGHKARLRGGRACGPVSDGSARGNRLLFYTRSLSRVPEWLLRVLLLLLRWLFQPIRRAMAARAKECGPDGSEETGERIRNYHKQAFEFISVALQIDEDEKGDKQKAVQWYRKGIAELEKGIQIQVTGAGEKADRARKLQDKMITNLSMAEDRLKLLGNLLSQSPAESSSDDSFYSFSNGNLRPAPASGAVSKKKDTLTITNQTSLRPKNPPKSTPNASGLNCTPSAAQSSRTGPQNNQKGPTVKGKNNVKASTTATASPQRKRDMKNFKNVDSKLASLILNEIVDSGSVVRFDDIAGQDLAKQALQEIVILPALRPELFTGLRAPARGLLLFGPPGNGKTMLAKAVAMESNATFFNISAATLTSKYVGEGEKLVRALFAVARELQPSIIFIDEIDSLLCERREGEHDASRRLKTEFLIEFDGVQSGGDERVLVMGATNRPQELDEAVLRRFAKRIYVALPTEETRLKLLKNLLSKHRNPLSQKELSQLARLTDGYSGSDLTSLAKDAALGPIRELKPEQVRNMSAHEMRDIRISDFLESLKRIKRSVSPQTLDQYVRWNREYGDTTGV.

Residues 1-35 are Cytoplasmic-facing; the sequence is MNSGHKARLRGGRACGPVSDGSARGNRLLFYTRSL. Positions 36 to 52 form an intramembrane region, helical; sequence SRVPEWLLRVLLLLLRW. The Cytoplasmic portion of the chain corresponds to 53-570; that stretch reads LFQPIRRAMA…NREYGDTTGV (518 aa). Residues 83-158 form the MIT domain; the sequence is YHKQAFEFIS…SMAEDRLKLL (76 aa). Residues 186–269 form a disordered region; it reads APASGAVSKK…SPQRKRDMKN (84 aa). 3 stretches are compositionally biased toward polar residues: residues 199–208, 216–242, and 251–261; these read LTITNQTSLR, TPNA…NQKG, and VKASTTATASP. 335-342 lines the ATP pocket; the sequence is GPPGNGKT.

The protein belongs to the AAA ATPase family. Spastin subfamily. Homohexamer. The homohexamer is stabilized by ATP-binding. The homohexamer may adopt a ring conformation through which microtubules pass prior to being severed. Interacts with microtubules.

It localises to the membrane. It is found in the cytoplasm. The protein localises to the cytoskeleton. The protein resides in the microtubule organizing center. Its subcellular location is the centrosome. It localises to the perinuclear region. It is found in the nucleus. The catalysed reaction is n ATP + n H2O + a microtubule = n ADP + n phosphate + (n+1) alpha/beta tubulin heterodimers.. ATP-dependent microtubule severing protein that specifically recognizes and cuts microtubules that are polyglutamylated. Preferentially recognizes and acts on microtubules decorated with short polyglutamate tails: severing activity increases as the number of glutamates per tubulin rises from one to eight, but decreases beyond this glutamylation threshold. Microtubule severing promotes reorganization of cellular microtubule arrays and the release of microtubules from the centrosome following nucleation. Required for membrane traffic from the endoplasmic reticulum (ER) to the Golgi and for completion of the abscission stage of cytokinesis. Also plays a role in axon growth and the formation of axonal branches. This chain is Spastin, found in Danio rerio (Zebrafish).